The following is a 470-amino-acid chain: 3-oxo-isoapionate kinase (470 aa).

The substrate site is built by aspartate 30 and arginine 78. Residues serine 291, glycine 403–serine 406, and glycine 451 contribute to the ATP site.

The protein belongs to the four-carbon acid sugar kinase family.

It catalyses the reaction 3-oxoisoapionate + ATP = 3-oxoisoapionate 4-phosphate + ADP + H(+). It functions in the pathway carbohydrate metabolism. Involved in catabolism of D-apiose. Catalyzes the phosphorylation of 3-oxo-isoapionate to 3-oxo-isoapionate 4-phosphate. In Paraburkholderia graminis (strain ATCC 700544 / DSM 17151 / LMG 18924 / NCIMB 13744 / C4D1M), this protein is 3-oxo-isoapionate kinase.